Reading from the N-terminus, the 206-residue chain is Transcription elongation factor A protein-like 5 (206 aa).

Basic and acidic residues predominate over residues 1 to 26 (MEKLYKENEGKPENERNLESEGKPED). The segment at 1–206 (MEKLYKENEG…QKDLEDVPYV (206 aa)) is disordered. Over residues 27 to 42 (EGSTEDEGKSDEEEKP) the composition is skewed to acidic residues. Positions 43-56 (DMEGKTECEGKRED) are enriched in basic and acidic residues. Positions 57 to 70 (EGEPGDEGQLEDEG) are enriched in acidic residues. 4 stretches are compositionally biased toward basic and acidic residues: residues 71–86 (NQEK…KPQS), 102–113 (AAEKRPAEDYVP), 121–160 (DRGT…EELR), and 196–206 (GQKDLEDVPYV).

This sequence belongs to the TFS-II family. TFA subfamily.

The protein resides in the nucleus. Its function is as follows. May be involved in transcriptional regulation. This is Transcription elongation factor A protein-like 5 (TCEAL5) from Homo sapiens (Human).